The following is a 181-amino-acid chain: uncharacterized protein (181 aa).

This sequence to M.jannaschii MJ1106.

This is an uncharacterized protein from Methanothermobacter thermautotrophicus (strain ATCC 29096 / DSM 1053 / JCM 10044 / NBRC 100330 / Delta H) (Methanobacterium thermoautotrophicum).